Here is a 629-residue protein sequence, read N- to C-terminus: tRNA uridine 5-carboxymethylaminomethyl modification enzyme MnmG (629 aa).

FAD-binding positions include 13–18 (GGGHAG), valine 125, and serine 180. NAD(+) is bound at residue 273–287 (GPRYCPSIEDKVMRF). Glutamine 370 contributes to the FAD binding site.

It belongs to the MnmG family. As to quaternary structure, homodimer. Heterotetramer of two MnmE and two MnmG subunits. It depends on FAD as a cofactor.

The protein localises to the cytoplasm. NAD-binding protein involved in the addition of a carboxymethylaminomethyl (cmnm) group at the wobble position (U34) of certain tRNAs, forming tRNA-cmnm(5)s(2)U34. The chain is tRNA uridine 5-carboxymethylaminomethyl modification enzyme MnmG from Photobacterium profundum (strain SS9).